Reading from the N-terminus, the 62-residue chain is Large ribosomal subunit protein bL35 (62 aa).

Basic residues predominate over residues 1–26; that stretch reads MPKMKTKSGLKKRIKITATGKVKRGN. The tract at residues 1–62 is disordered; sequence MPKMKTKSGL…SDFKRYKELI (62 aa). Residues 53 to 62 show a composition bias toward basic and acidic residues; that stretch reads SDFKRYKELI.

The protein belongs to the bacterial ribosomal protein bL35 family.

This chain is Large ribosomal subunit protein bL35, found in Metamycoplasma arthritidis (strain 158L3-1) (Mycoplasma arthritidis).